The chain runs to 137 residues: Small ribosomal subunit protein uS12 (137 aa).

2 disordered regions span residues 1–22 and 35–57; these read MPTI…SKSP and ATNN…TPKK. The segment covering 9-18 has biased composition (basic residues); the sequence is RKPRKSKVSK. D102 carries the 3-methylthioaspartic acid modification.

It belongs to the universal ribosomal protein uS12 family. As to quaternary structure, part of the 30S ribosomal subunit. Contacts proteins S8 and S17. May interact with IF1 in the 30S initiation complex.

With S4 and S5 plays an important role in translational accuracy. Functionally, interacts with and stabilizes bases of the 16S rRNA that are involved in tRNA selection in the A site and with the mRNA backbone. Located at the interface of the 30S and 50S subunits, it traverses the body of the 30S subunit contacting proteins on the other side and probably holding the rRNA structure together. The combined cluster of proteins S8, S12 and S17 appears to hold together the shoulder and platform of the 30S subunit. The polypeptide is Small ribosomal subunit protein uS12 (Leuconostoc mesenteroides subsp. mesenteroides (strain ATCC 8293 / DSM 20343 / BCRC 11652 / CCM 1803 / JCM 6124 / NCDO 523 / NBRC 100496 / NCIMB 8023 / NCTC 12954 / NRRL B-1118 / 37Y)).